Reading from the N-terminus, the 454-residue chain is GTPase Obg (454 aa).

Positions 2 to 159 constitute an Obg domain; sequence SDFVDEAVLH…VDIRLELKTI (158 aa). The disordered stretch occupies residues 60–87; the sequence is YQRRPHRKAENGAPGQGSNRSGASGADL. The OBG-type G domain maps to 160–335; that stretch reads ADVGLVGFPS…LAYALGEQVA (176 aa). GTP-binding positions include 166 to 173, 191 to 195, 212 to 215, 287 to 290, and 316 to 318; these read GFPSAGKS, FTTLV, DVPG, NKID, and SAA. Mg(2+)-binding residues include S173 and T193. Residues 353–435 enclose the OCT domain; the sequence is PREIGEIPFQ…DNPVVFDWDP (83 aa).

It belongs to the TRAFAC class OBG-HflX-like GTPase superfamily. OBG GTPase family. In terms of assembly, monomer. It depends on Mg(2+) as a cofactor.

It localises to the cytoplasm. Its function is as follows. An essential GTPase which binds GTP, GDP and possibly (p)ppGpp with moderate affinity, with high nucleotide exchange rates and a fairly low GTP hydrolysis rate. Plays a role in control of the cell cycle, stress response, ribosome biogenesis and in those bacteria that undergo differentiation, in morphogenesis control. The sequence is that of GTPase Obg from Thermobifida fusca (strain YX).